The primary structure comprises 448 residues: Phosphoglucosamine mutase (448 aa).

The active-site Phosphoserine intermediate is the Ser102. Positions 102, 243, 245, and 247 each coordinate Mg(2+). Ser102 carries the phosphoserine modification.

This sequence belongs to the phosphohexose mutase family. The cofactor is Mg(2+). Activated by phosphorylation.

It carries out the reaction alpha-D-glucosamine 1-phosphate = D-glucosamine 6-phosphate. In terms of biological role, catalyzes the conversion of glucosamine-6-phosphate to glucosamine-1-phosphate. This Mycobacterium bovis (strain ATCC BAA-935 / AF2122/97) protein is Phosphoglucosamine mutase.